Here is a 348-residue protein sequence, read N- to C-terminus: Anthranilate phosphoribosyltransferase (348 aa).

Residues G91, 94–95 (GD), T99, 101–104 (NIST), 119–127 (KHGNRSASG), and S131 contribute to the 5-phospho-alpha-D-ribose 1-diphosphate site. G91 contributes to the anthranilate binding site. A Mg(2+)-binding site is contributed by S103. Position 122 (N122) interacts with anthranilate. Position 177 (R177) interacts with anthranilate. Mg(2+) contacts are provided by D236 and E237.

It belongs to the anthranilate phosphoribosyltransferase family. In terms of assembly, homodimer. The cofactor is Mg(2+).

The enzyme catalyses N-(5-phospho-beta-D-ribosyl)anthranilate + diphosphate = 5-phospho-alpha-D-ribose 1-diphosphate + anthranilate. The protein operates within amino-acid biosynthesis; L-tryptophan biosynthesis; L-tryptophan from chorismate: step 2/5. Functionally, catalyzes the transfer of the phosphoribosyl group of 5-phosphorylribose-1-pyrophosphate (PRPP) to anthranilate to yield N-(5'-phosphoribosyl)-anthranilate (PRA). In Synechococcus elongatus (strain ATCC 33912 / PCC 7942 / FACHB-805) (Anacystis nidulans R2), this protein is Anthranilate phosphoribosyltransferase.